We begin with the raw amino-acid sequence, 250 residues long: AA9 family lytic polysaccharide monooxygenase AA17 (250 aa).

A signal peptide spans methionine 1–glycine 21. Residues histidine 22 and histidine 107 each contribute to the Cu(2+) site. 2 disulfides stabilise this stretch: cysteine 77–cysteine 199 and cysteine 118–cysteine 122. Asparagine 159 carries an N-linked (GlcNAc...) asparagine glycan. O2 contacts are provided by histidine 185 and glutamine 194. Position 196 (tyrosine 196) interacts with Cu(2+).

It belongs to the polysaccharide monooxygenase AA9 family. Cu(2+) serves as cofactor.

Its subcellular location is the secreted. Its function is as follows. Lytic polysaccharide monooxygenase (LPMO) that exhibits oxidative cleavage beta-O-4 linkage of lignin resulting in the formation of aromatic compound guaiacol. Catalysis by LPMOs requires the reduction of the active-site copper from Cu(II) to Cu(I) by a reducing agent and H(2)O(2) or O(2) as a cosubstrate. Does not use cellulose, cello-oligosaccharides, xyloglucan, xylan, chitin nor starch as substrates. Able to depolymerize the lignin dimer guaicyl glycerol beta-guaicyl ether (GGE). This is AA9 family lytic polysaccharide monooxygenase AA17 from Aspergillus oryzae (strain ATCC 42149 / RIB 40) (Yellow koji mold).